The sequence spans 289 residues: RNA-binding protein CP31B, chloroplastic (289 aa).

A chloroplast-targeting transit peptide spans 1 to 71 (MTSSVLTPSL…NSSPVVTFVS (71 aa)). RRM domains lie at 113-191 (AKLF…RAAP) and 207-285 (FRIY…VAEE).

In terms of processing, ADP-ribosylated by the Pseudomonas syringae type III effector HopU1. ADP-ribosylation reduces the ability of the protein to bind RNA.

Its subcellular location is the plastid. The protein resides in the chloroplast. Required for specific RNA editing events in chloroplasts and stabilizes specific chloroplast mRNAs. The chain is RNA-binding protein CP31B, chloroplastic from Arabidopsis thaliana (Mouse-ear cress).